Here is a 297-residue protein sequence, read N- to C-terminus: Phosphatidylserine decarboxylase proenzyme (297 aa).

Residues Asp92, His149, and Ser254 each act as charge relay system; for autoendoproteolytic cleavage activity in the active site. Ser254 serves as the catalytic Schiff-base intermediate with substrate; via pyruvic acid; for decarboxylase activity. Ser254 is modified (pyruvic acid (Ser); by autocatalysis).

The protein belongs to the phosphatidylserine decarboxylase family. PSD-B subfamily. Prokaryotic type I sub-subfamily. Heterodimer of a large membrane-associated beta subunit and a small pyruvoyl-containing alpha subunit. Requires pyruvate as cofactor. Is synthesized initially as an inactive proenzyme. Formation of the active enzyme involves a self-maturation process in which the active site pyruvoyl group is generated from an internal serine residue via an autocatalytic post-translational modification. Two non-identical subunits are generated from the proenzyme in this reaction, and the pyruvate is formed at the N-terminus of the alpha chain, which is derived from the carboxyl end of the proenzyme. The autoendoproteolytic cleavage occurs by a canonical serine protease mechanism, in which the side chain hydroxyl group of the serine supplies its oxygen atom to form the C-terminus of the beta chain, while the remainder of the serine residue undergoes an oxidative deamination to produce ammonia and the pyruvoyl prosthetic group on the alpha chain. During this reaction, the Ser that is part of the protease active site of the proenzyme becomes the pyruvoyl prosthetic group, which constitutes an essential element of the active site of the mature decarboxylase.

Its subcellular location is the cell membrane. The enzyme catalyses a 1,2-diacyl-sn-glycero-3-phospho-L-serine + H(+) = a 1,2-diacyl-sn-glycero-3-phosphoethanolamine + CO2. It participates in phospholipid metabolism; phosphatidylethanolamine biosynthesis; phosphatidylethanolamine from CDP-diacylglycerol: step 2/2. Its function is as follows. Catalyzes the formation of phosphatidylethanolamine (PtdEtn) from phosphatidylserine (PtdSer). The protein is Phosphatidylserine decarboxylase proenzyme of Bordetella bronchiseptica (strain ATCC BAA-588 / NCTC 13252 / RB50) (Alcaligenes bronchisepticus).